The chain runs to 70 residues: U2-agatoxin-Ao1d (70 aa).

A signal peptide spans 1 to 20; it reads MRAIIYLLLISAMVFSMTKA. A propeptide spanning residues 21–34 is cleaved from the precursor; the sequence is VPEEEGLQLSEDER. 3 disulfide bridges follow: Cys-37–Cys-53, Cys-44–Cys-58, and Cys-52–Cys-68. Leucine amide is present on Leu-69.

This sequence belongs to the neurotoxin 01 (U2-agtx) family. Expressed by the venom gland.

The protein localises to the secreted. Insect active toxin causing rapid but reversible paralysis in crickets. No activity shown in mammals. Does not show effect on mammalian voltage-gated calcium channels. This is U2-agatoxin-Ao1d from Agelena orientalis (Funnel-web spider).